The sequence spans 212 residues: Cytidylate kinase (212 aa).

11 to 19 (GPAASGKGT) contributes to the ATP binding site. Residues 50 to 69 (GGDPADPAASEEQARSLSRL) form a disordered region.

This sequence belongs to the cytidylate kinase family. Type 1 subfamily.

The protein localises to the cytoplasm. It carries out the reaction CMP + ATP = CDP + ADP. The catalysed reaction is dCMP + ATP = dCDP + ADP. The chain is Cytidylate kinase from Acidiphilium cryptum (strain JF-5).